Here is a 59-residue protein sequence, read N- to C-terminus: Large ribosomal subunit protein bL32 (59 aa).

A disordered region spans residues Met-1–Asp-59. The span at Arg-49 to Asp-59 shows a compositional bias: basic residues.

This sequence belongs to the bacterial ribosomal protein bL32 family.

The sequence is that of Large ribosomal subunit protein bL32 from Ralstonia pickettii (strain 12J).